A 221-amino-acid polypeptide reads, in one-letter code: MAGSRRLAMRLLSGCAWVRGSDSAVLGRLRDEAVVHPGFLSQEEEDTLTRELEPQLRRRRYEYDHWDAAIHGFRETEKSCWSDASQVILQRVRAAAFGPDQSLLSPVHVLDLEPRGYIKPHVDSVKFCGSTIAGLSLLSPSVMKLVHTQEPEQWLELLLEPGSLYILRGSARYDFSHEILRDEESFFGEHRVPRGRRISVICRSLPEGMGPGRPEEPPPAC.

Residues 1 to 23 (MAGSRRLAMRLLSGCAWVRGSDS) constitute a mitochondrion transit peptide. Fe cation is bound by residues H121 and D123. Residue Y165 coordinates 2-oxoglutarate. H177 contacts Fe cation. 2-oxoglutarate-binding positions include 197–199 (RIS) and R203.

Belongs to the alkB family. It depends on Fe(2+) as a cofactor. In terms of tissue distribution, widely expressed.

It is found in the mitochondrion matrix. Functionally, may function as protein hydroxylase; can catalyze auto-hydroxylation at Leu-110 (in vitro), but this activity may be due to the absence of the true substrate. Required to induce programmed necrosis in response to DNA damage caused by cytotoxic alkylating agents. Acts by triggering the collapse of mitochondrial membrane potential and loss of mitochondrial function that leads to energy depletion and cell death. ALKBH7-mediated necrosis is probably required to prevent the accumulation of cells with DNA damage. Does not display DNA demethylase activity. Involved in fatty acid metabolism. The protein is Alpha-ketoglutarate-dependent dioxygenase alkB homolog 7, mitochondrial (Alkbh7) of Mus musculus (Mouse).